The primary structure comprises 319 residues: NH(3)-dependent NAD(+) synthetase (319 aa).

33 to 40 (GLSGGIDS) serves as a coordination point for ATP. Residue Asp-39 participates in Mg(2+) binding. Residue Arg-169 coordinates deamido-NAD(+). Position 189 (Thr-189) interacts with ATP. Residue Glu-194 coordinates Mg(2+). Deamido-NAD(+)-binding residues include Lys-202 and Asp-209. ATP is bound by residues Lys-218 and Thr-240.

It belongs to the NAD synthetase family. In terms of assembly, homodimer.

It catalyses the reaction deamido-NAD(+) + NH4(+) + ATP = AMP + diphosphate + NAD(+) + H(+). It participates in cofactor biosynthesis; NAD(+) biosynthesis; NAD(+) from deamido-NAD(+) (ammonia route): step 1/1. Catalyzes the ATP-dependent amidation of deamido-NAD to form NAD. Uses ammonia as a nitrogen source. The sequence is that of NH(3)-dependent NAD(+) synthetase from Mesorhizobium japonicum (strain LMG 29417 / CECT 9101 / MAFF 303099) (Mesorhizobium loti (strain MAFF 303099)).